Here is a 568-residue protein sequence, read N- to C-terminus: MAGUK p55 subfamily member 3 (568 aa).

2 consecutive L27 domains span residues 6–60 and 61–118; these read EDSG…ERQS and PTPV…FDPV. The PDZ domain maps to 137-218; it reads IVRLVKNKEP…SITLKIIPAT (82 aa). The SH3 domain maps to 226–296; sequence DSKVFMRALF…PSKQFQERRL (71 aa). Position 307 is a phosphoserine (Ser307). Residues 385 to 568 form the Guanylate kinase-like domain; sequence PRLVVLIGSL…QEPAASSELS (184 aa).

Belongs to the MAGUK family. Interacts with HTR2C; this interaction stabilizes the receptor at the plasma membrane and prevents the desensitization of the HTR2C receptor-mediated calcium response. Interacts with HTR2A. Interacts with HTR4. Interacts (via PDZ domain) with CADM1 (via C-terminus)Interacts (via PDZ domain) with CADM1; this interaction connects CADM1 with DLG1. Interacts (via Guanylate kinase-like domain) with PALS1. Interacts with DLG1 (via N-terminus); this interaction connects CADM1 with DLG1 and links CADM1 with the regulatory subunit of phosphoinositide-3-kinase (PI3K) by forming a multiprotein complex and participates in cell spreading. In terms of tissue distribution, expressed in brain, skeletal muscle, testis, kidney, and lung.

The protein resides in the apical cell membrane. It is found in the cell membrane. Its subcellular location is the cell junction. The protein localises to the adherens junction. In terms of biological role, participates in cell spreading through the phosphoinositide-3-kinase (PI3K) pathway by connecting CADM1 to DLG1 and the regulatory subunit of phosphoinositide-3-kinase (PI3K). Stabilizes HTR2C at the plasma membrane and prevents its desensitization. May participates in the maintenance of adherens junctions. The sequence is that of MAGUK p55 subfamily member 3 from Mus musculus (Mouse).